Consider the following 365-residue polypeptide: Phospho-N-acetylmuramoyl-pentapeptide-transferase (365 aa).

10 consecutive transmembrane segments (helical) span residues 22–42, 74–94, 95–115, 134–154, 168–188, 201–221, 240–260, 267–287, 292–312, and 342–362; these read YISV…LALG, TMGG…WGDL, TSIY…IGFF, KFAL…YLLS, SLYI…IING, GLAI…AYIE, LAEV…FLWF, VFMG…IAVM, LIFF…MLQV, and KVVI…LAAI.

It belongs to the glycosyltransferase 4 family. MraY subfamily. Mg(2+) serves as cofactor.

It is found in the cell inner membrane. The catalysed reaction is UDP-N-acetyl-alpha-D-muramoyl-L-alanyl-gamma-D-glutamyl-meso-2,6-diaminopimeloyl-D-alanyl-D-alanine + di-trans,octa-cis-undecaprenyl phosphate = di-trans,octa-cis-undecaprenyl diphospho-N-acetyl-alpha-D-muramoyl-L-alanyl-D-glutamyl-meso-2,6-diaminopimeloyl-D-alanyl-D-alanine + UMP. The protein operates within cell wall biogenesis; peptidoglycan biosynthesis. Catalyzes the initial step of the lipid cycle reactions in the biosynthesis of the cell wall peptidoglycan: transfers peptidoglycan precursor phospho-MurNAc-pentapeptide from UDP-MurNAc-pentapeptide onto the lipid carrier undecaprenyl phosphate, yielding undecaprenyl-pyrophosphoryl-MurNAc-pentapeptide, known as lipid I. This chain is Phospho-N-acetylmuramoyl-pentapeptide-transferase, found in Francisella tularensis subsp. novicida (strain U112).